Consider the following 263-residue polypeptide: Hydroxyethylthiazole kinase (263 aa).

Met-39 provides a ligand contact to substrate. Residues Lys-115 and Thr-160 each coordinate ATP. Position 187 (Gly-187) interacts with substrate.

It belongs to the Thz kinase family. The cofactor is Mg(2+).

It catalyses the reaction 5-(2-hydroxyethyl)-4-methylthiazole + ATP = 4-methyl-5-(2-phosphooxyethyl)-thiazole + ADP + H(+). It functions in the pathway cofactor biosynthesis; thiamine diphosphate biosynthesis; 4-methyl-5-(2-phosphoethyl)-thiazole from 5-(2-hydroxyethyl)-4-methylthiazole: step 1/1. In terms of biological role, catalyzes the phosphorylation of the hydroxyl group of 4-methyl-5-beta-hydroxyethylthiazole (THZ). This is Hydroxyethylthiazole kinase from Staphylococcus haemolyticus (strain JCSC1435).